We begin with the raw amino-acid sequence, 526 residues long: Maturase K (526 aa).

This sequence belongs to the intron maturase 2 family. MatK subfamily.

Its subcellular location is the plastid. The protein localises to the chloroplast. Its function is as follows. Usually encoded in the trnK tRNA gene intron. Probably assists in splicing its own and other chloroplast group II introns. In Iris setosa (Hiougi-ayame), this protein is Maturase K.